The primary structure comprises 215 residues: Beta-crystallin A3 (215 aa).

Residue Met-1 is modified to N-acetylmethionine. The tract at residues 1 to 24 is disordered; it reads METQTVQQELESLPTTKMAQTNPM. The tract at residues 1 to 30 is N-terminal arm; sequence METQTVQQELESLPTTKMAQTNPMPGSVGP. Glu-2 bears the N-acetylalanine mark. Beta/gamma crystallin 'Greek key' domains follow at residues 31–70 and 71–117; these read WKIT…KVEC and GAWV…RPIC. S-glutathionyl cysteine; alternate occurs at positions 82 and 117. Residues Cys-82 and Cys-117 each carry the S-methylcysteine; alternate modification. The segment at 118–123 is connecting peptide; it reads SANHKE. 2 consecutive Beta/gamma crystallin 'Greek key' domains span residues 124-165 and 166-214; these read SKIT…KIQC and GAWV…RRIQ.

The protein belongs to the beta/gamma-crystallin family. As to quaternary structure, homo/heterodimer, or complexes of higher-order. The structure of beta-crystallin oligomers seems to be stabilized through interactions between the N-terminal arms. Interacts with CRYBA1. Post-translationally, specific cleavages in the N-terminal arm occur during lens maturation and give rise to several truncated forms. Isoform A1 contains a N-acetylalanine at position 2.

Crystallins are the dominant structural components of the vertebrate eye lens. The protein is Beta-crystallin A3 of Bos taurus (Bovine).